Consider the following 541-residue polypeptide: Chaperonin GroEL 2 (541 aa).

Residues 29–32, 86–90, glycine 413, 476–478, and aspartate 492 contribute to the ATP site; these read TLGP, DGTTT, and NAA.

The protein belongs to the chaperonin (HSP60) family. In terms of assembly, forms a cylinder of 14 subunits composed of two heptameric rings stacked back-to-back. Interacts with the co-chaperonin GroES.

It localises to the secreted. Its subcellular location is the capsule. The protein resides in the cell surface. The protein localises to the cell wall. The enzyme catalyses ATP + H2O + a folded polypeptide = ADP + phosphate + an unfolded polypeptide.. Functionally, together with its co-chaperonin GroES, plays an essential role in assisting protein folding. The GroEL-GroES system forms a nano-cage that allows encapsulation of the non-native substrate proteins and provides a physical environment optimized to promote and accelerate protein folding. This Mycobacterium leprae (strain TN) protein is Chaperonin GroEL 2.